Consider the following 330-residue polypeptide: Protein pelota homolog (330 aa).

The protein belongs to the eukaryotic release factor 1 family. Pelota subfamily. In terms of assembly, monomer. Requires a divalent metal cation as cofactor.

It is found in the cytoplasm. Its function is as follows. May function in recognizing stalled ribosomes, interact with stem-loop structures in stalled mRNA molecules, and effect endonucleolytic cleavage of the mRNA. May play a role in the release non-functional ribosomes and degradation of damaged mRNAs. Has endoribonuclease activity. The protein is Protein pelota homolog of Pyrobaculum islandicum (strain DSM 4184 / JCM 9189 / GEO3).